Consider the following 251-residue polypeptide: Probable transcriptional regulatory protein Amuc_0709 (251 aa).

It belongs to the TACO1 family.

It localises to the cytoplasm. This is Probable transcriptional regulatory protein Amuc_0709 from Akkermansia muciniphila (strain ATCC BAA-835 / DSM 22959 / JCM 33894 / BCRC 81048 / CCUG 64013 / CIP 107961 / Muc).